The primary structure comprises 495 residues: Iroquois-class homeodomain protein irx-4-B (495 aa).

Positions 141–203 form a DNA-binding region, homeobox; TALE-type; it reads GSTRRKNATR…NARRRLKKEN (63 aa). Positions 203–245 are disordered; that stretch reads NKMTWPPRNKCSDEKRPYDEEEEEEEDSQKATIKNEKKTVDEE. Over residues 235-245 the composition is skewed to basic and acidic residues; sequence IKNEKKTVDEE.

It belongs to the TALE/IRO homeobox family.

It localises to the nucleus. In terms of biological role, acts partially redundantly with other irx members in neural patterning. Required for formation of the posterior forebrain, midbrain, hindbrain, and to a lesser extent, spinal cord. Patterns the neuroectoderm in both the anterior/posterior and dorsal/ventral axes. Does not appear to play a role in pronephros kidney development. In Xenopus laevis (African clawed frog), this protein is Iroquois-class homeodomain protein irx-4-B (irx4-b).